The sequence spans 854 residues: Leucine--tRNA ligase (854 aa).

Positions 1–32 (MARRDMAAETMDPRASTEPSPNEPREPARYDH) are disordered. Residues 23–32 (EPREPARYDH) are compositionally biased toward basic and acidic residues. The 'HIGH' region motif lies at 69–80 (PYPSGSGLHVGH). The short motif at 633 to 637 (KMSKS) is the 'KMSKS' region element. K636 is a binding site for ATP.

This sequence belongs to the class-I aminoacyl-tRNA synthetase family.

It is found in the cytoplasm. It catalyses the reaction tRNA(Leu) + L-leucine + ATP = L-leucyl-tRNA(Leu) + AMP + diphosphate. This chain is Leucine--tRNA ligase, found in Sorangium cellulosum (strain So ce56) (Polyangium cellulosum (strain So ce56)).